The primary structure comprises 735 residues: Translation initiation factor IF-2 (735 aa).

2 stretches are compositionally biased toward basic and acidic residues: residues 52–66 and 101–117; these read VNSE…EKPK and KGKE…EKKL. The disordered stretch occupies residues 52 to 154; sequence VNSEKKAEKK…PAKKEKELPK (103 aa). Over residues 121 to 133 the composition is skewed to basic residues; the sequence is AKKKGKGPMKGKK. Low complexity predominate over residues 134–145; sequence QAAPASKQAQQP. Residues 236-405 form the tr-type G domain; sequence ERPPVVTIMG…LLVSEMEELK (170 aa). Residues 245-252 form a G1 region; that stretch reads GHVDHGKT. 245–252 contributes to the GTP binding site; that stretch reads GHVDHGKT. Residues 270-274 are G2; that stretch reads GITQH. The G3 stretch occupies residues 291–294; the sequence is DTPG. GTP-binding positions include 291 to 295 and 345 to 348; these read DTPGH and NKMD. Residues 345–348 form a G4 region; that stretch reads NKMD. The G5 stretch occupies residues 381–383; sequence SAK.

This sequence belongs to the TRAFAC class translation factor GTPase superfamily. Classic translation factor GTPase family. IF-2 subfamily.

It localises to the cytoplasm. Functionally, one of the essential components for the initiation of protein synthesis. Protects formylmethionyl-tRNA from spontaneous hydrolysis and promotes its binding to the 30S ribosomal subunits. Also involved in the hydrolysis of GTP during the formation of the 70S ribosomal complex. The sequence is that of Translation initiation factor IF-2 from Geobacillus thermodenitrificans (strain NG80-2).